The sequence spans 175 residues: Cuticle protein CP1876 (175 aa).

In terms of tissue distribution, calcified shell.

This is Cuticle protein CP1876 from Cancer pagurus (Rock crab).